A 154-amino-acid polypeptide reads, in one-letter code: Large ribosomal subunit protein uL13 (154 aa).

This sequence belongs to the universal ribosomal protein uL13 family. In terms of assembly, part of the 50S ribosomal subunit.

This protein is one of the early assembly proteins of the 50S ribosomal subunit, although it is not seen to bind rRNA by itself. It is important during the early stages of 50S assembly. The chain is Large ribosomal subunit protein uL13 from Rhizobium etli (strain CIAT 652).